A 507-amino-acid polypeptide reads, in one-letter code: Natural resistance-associated macrophage protein 1 (507 aa).

The disordered stretch occupies residues M1–L36. The Cytoplasmic portion of the chain corresponds to M1–K39. Polar residues predominate over residues Q8–P22. A helical transmembrane segment spans residues I40–L60. The Extracellular segment spans residues L61–R123. The helical transmembrane segment at I124–D144 threads the bilayer. Topologically, residues N145–E152 are cytoplasmic. The helical transmembrane segment at A153–A173 threads the bilayer. The Extracellular portion of the chain corresponds to R174–Q199. The helical transmembrane segment at A200 to V220 threads the bilayer. At K221–T245 the chain is on the cytoplasmic side. Residues I246–F266 form a helical membrane-spanning segment. The Extracellular portion of the chain corresponds to Y267–G305. N280 and N294 each carry an N-linked (GlcNAc...) asparagine glycan. The helical transmembrane segment at V306–A326 threads the bilayer. The Cytoplasmic segment spans residues A327–R353. The chain crosses the membrane as a helical span at residues F354–F374. The Extracellular portion of the chain corresponds to R375–Q391. The chain crosses the membrane as a helical span at residues S392–M412. The Cytoplasmic segment spans residues Q413 to K422. The chain crosses the membrane as a helical span at residues V423 to Y443. The Extracellular segment spans residues L444–A451. The helical transmembrane segment at Y452–W472 threads the bilayer. Topologically, residues T473–G507 are cytoplasmic.

It belongs to the NRAMP family.

Its subcellular location is the late endosome membrane. It is found in the lysosome membrane. It carries out the reaction Zn(2+)(in) + H(+)(out) = Zn(2+)(out) + H(+)(in). It catalyses the reaction Fe(2+)(in) + H(+)(out) = Fe(2+)(out) + H(+)(in). The catalysed reaction is Mn(2+)(in) + H(+)(out) = Mn(2+)(out) + H(+)(in). Functionally, macrophage-specific antiporter that fluxes metal ions in either direction against a proton gradient. Localized to late endosomal lysosomal membranes, delivers bivalent cations from the cytosol into these acidic compartments where they may directly affect antimicrobial activity. Involved in iron metabolism and host natural resistance to infection with intracellular parasites. Pathogen resistance involves sequestration of Fe(2+) and Mn(2+), cofactors of both prokaryotic and eukaryotic catalases and superoxide dismutases, not only to protect the macrophage against its own generation of reactive oxygen species, but to deny the cations to the pathogen for synthesis of its protective enzymes. The sequence is that of Natural resistance-associated macrophage protein 1 (Slc11a1) from Rattus norvegicus (Rat).